A 103-amino-acid polypeptide reads, in one-letter code: L-rhamnose-binding lectin ELEL-1 (103 aa).

An SUEL-type lectin domain is found at 13-102 (VCEGSSLTIS…KYLELSYDCS (90 aa)). Disulfide bonds link Cys-14–Cys-45, Cys-23–Cys-101, Cys-56–Cys-88, and Cys-69–Cys-75.

Homodimer; disulfide-linked. In terms of processing, not glycosylated.

In terms of biological role, rhamnose-binding lectin. Also binds alpha-D-melibiose, alpha-D-lactose, beta-D-lactose, methyl-alpha-D-galactopyranoside, methyl-beta-D--galactopyranoside and D-galactose but not D-arabinose, L-fucose, D-glucose, D-mannose, D-maltose, D-sucrose, N-acetyl-D-galactosamine, N-acetyl-D-glucosamine, N-acetyl-D-mannosamine-D-xylose or by glycoproteins orosomucoid, thyroglobulin, ovomucoid and porcine stomach mucin. Shows cation-independent hemagglutinating activity against rabbit and human erythrocytes. Agglutinates cells of Gram-positive bacterial species S.aureus but not those of Gram-negative E.coli. This chain is L-rhamnose-binding lectin ELEL-1, found in Echinometra lucunter (Rock-boring urchin).